We begin with the raw amino-acid sequence, 255 residues long: 4-diphosphocytidyl-2-C-methyl-D-erythritol kinase (255 aa).

Lysine 6 is a catalytic residue. 95–105 (PVCAGLGGGSS) is a binding site for ATP. Aspartate 137 is a catalytic residue.

This sequence belongs to the GHMP kinase family. IspE subfamily.

The catalysed reaction is 4-CDP-2-C-methyl-D-erythritol + ATP = 4-CDP-2-C-methyl-D-erythritol 2-phosphate + ADP + H(+). It functions in the pathway isoprenoid biosynthesis; isopentenyl diphosphate biosynthesis via DXP pathway; isopentenyl diphosphate from 1-deoxy-D-xylulose 5-phosphate: step 3/6. Functionally, catalyzes the phosphorylation of the position 2 hydroxy group of 4-diphosphocytidyl-2C-methyl-D-erythritol. In Campylobacter jejuni subsp. jejuni serotype O:6 (strain 81116 / NCTC 11828), this protein is 4-diphosphocytidyl-2-C-methyl-D-erythritol kinase.